Here is a 214-residue protein sequence, read N- to C-terminus: Probable septum site-determining protein MinC (214 aa).

The protein belongs to the MinC family. In terms of assembly, interacts with MinD and FtsZ.

Cell division inhibitor that blocks the formation of polar Z ring septums. Rapidly oscillates between the poles of the cell to destabilize FtsZ filaments that have formed before they mature into polar Z rings. Prevents FtsZ polymerization. The protein is Probable septum site-determining protein MinC of Caldanaerobacter subterraneus subsp. tengcongensis (strain DSM 15242 / JCM 11007 / NBRC 100824 / MB4) (Thermoanaerobacter tengcongensis).